We begin with the raw amino-acid sequence, 227 residues long: Cytidylate kinase (227 aa).

Residue 10 to 18 (GPSGSGKGT) coordinates ATP.

Belongs to the cytidylate kinase family. Type 1 subfamily.

It is found in the cytoplasm. The enzyme catalyses CMP + ATP = CDP + ADP. It catalyses the reaction dCMP + ATP = dCDP + ADP. The polypeptide is Cytidylate kinase (Acinetobacter baylyi (strain ATCC 33305 / BD413 / ADP1)).